Here is a 318-residue protein sequence, read N- to C-terminus: NADH-ubiquinone oxidoreductase chain 1 (318 aa).

Helical transmembrane passes span 2 to 22 (FMIN…FLTL), 68 to 88 (ISMF…MWTP), 100 to 120 (LGVL…LWSG), 146 to 166 (LAII…PTLI), 171 to 191 (HMWL…STLA), 222 to 242 (LFFL…TILF), 253 to 273 (ELYT…FLWV), and 293 to 313 (FLPL…ITAG).

This sequence belongs to the complex I subunit 1 family. In terms of assembly, core subunit of respiratory chain NADH dehydrogenase (Complex I) which is composed of 45 different subunits.

The protein localises to the mitochondrion inner membrane. The enzyme catalyses a ubiquinone + NADH + 5 H(+)(in) = a ubiquinol + NAD(+) + 4 H(+)(out). Core subunit of the mitochondrial membrane respiratory chain NADH dehydrogenase (Complex I) which catalyzes electron transfer from NADH through the respiratory chain, using ubiquinone as an electron acceptor. Essential for the catalytic activity and assembly of complex I. This Hipposideros diadema (Diadem leaf-nosed bat) protein is NADH-ubiquinone oxidoreductase chain 1 (MT-ND1).